The chain runs to 179 residues: MSRIGKLPITVPAGVDVTIDGRTVQVKGPKGSLSHTIAAPIEIAKGEDGVLNVTRPNDERQNKALHGLSRTLVANMITGVTQGYVKKLEISGVGYRVLAKGSNLEFSLGYSHSITVEAPEGITFKVEAPTRFSVEGIDKQKVGEVAANIRKLRKPDPYKAKGVKYEGEVIRRKVGKAGK.

This sequence belongs to the universal ribosomal protein uL6 family. Part of the 50S ribosomal subunit.

Functionally, this protein binds to the 23S rRNA, and is important in its secondary structure. It is located near the subunit interface in the base of the L7/L12 stalk, and near the tRNA binding site of the peptidyltransferase center. This Streptomyces avermitilis (strain ATCC 31267 / DSM 46492 / JCM 5070 / NBRC 14893 / NCIMB 12804 / NRRL 8165 / MA-4680) protein is Large ribosomal subunit protein uL6.